A 201-amino-acid chain; its full sequence is Probable GTP-binding protein EngB (201 aa).

The EngB-type G domain maps to 22-197; the sequence is TFPEYAFIGR…LNYIESINKE (176 aa). Residues 30-37, 57-61, 75-78, 142-145, and 175-178 each bind GTP; these read GRSNVGKS, GKTML, DLPG, TKAD, and ITSS. Mg(2+) contacts are provided by Ser37 and Thr59.

The protein belongs to the TRAFAC class TrmE-Era-EngA-EngB-Septin-like GTPase superfamily. EngB GTPase family. Mg(2+) serves as cofactor.

Functionally, necessary for normal cell division and for the maintenance of normal septation. This is Probable GTP-binding protein EngB from Bacteroides fragilis (strain ATCC 25285 / DSM 2151 / CCUG 4856 / JCM 11019 / LMG 10263 / NCTC 9343 / Onslow / VPI 2553 / EN-2).